Consider the following 462-residue polypeptide: UDP-N-acetylmuramate--L-alanine ligase (462 aa).

Position 116–122 (116–122 (GAHGKTT)) interacts with ATP.

It belongs to the MurCDEF family.

The protein resides in the cytoplasm. It carries out the reaction UDP-N-acetyl-alpha-D-muramate + L-alanine + ATP = UDP-N-acetyl-alpha-D-muramoyl-L-alanine + ADP + phosphate + H(+). It functions in the pathway cell wall biogenesis; peptidoglycan biosynthesis. Cell wall formation. This Desulforamulus reducens (strain ATCC BAA-1160 / DSM 100696 / MI-1) (Desulfotomaculum reducens) protein is UDP-N-acetylmuramate--L-alanine ligase.